A 358-amino-acid chain; its full sequence is S-adenosylmethionine:tRNA ribosyltransferase-isomerase (358 aa).

This sequence belongs to the QueA family. As to quaternary structure, monomer.

The protein resides in the cytoplasm. It carries out the reaction 7-aminomethyl-7-carbaguanosine(34) in tRNA + S-adenosyl-L-methionine = epoxyqueuosine(34) in tRNA + adenine + L-methionine + 2 H(+). It participates in tRNA modification; tRNA-queuosine biosynthesis. Functionally, transfers and isomerizes the ribose moiety from AdoMet to the 7-aminomethyl group of 7-deazaguanine (preQ1-tRNA) to give epoxyqueuosine (oQ-tRNA). This is S-adenosylmethionine:tRNA ribosyltransferase-isomerase from Chelativorans sp. (strain BNC1).